The sequence spans 538 residues: Ribulokinase 1 (538 aa).

This sequence belongs to the ribulokinase family.

The enzyme catalyses D-ribulose + ATP = D-ribulose 5-phosphate + ADP + H(+). It catalyses the reaction L-ribulose + ATP = L-ribulose 5-phosphate + ADP + H(+). It functions in the pathway carbohydrate degradation; L-arabinose degradation via L-ribulose; D-xylulose 5-phosphate from L-arabinose (bacterial route): step 2/3. This is Ribulokinase 1 from Staphylococcus saprophyticus subsp. saprophyticus (strain ATCC 15305 / DSM 20229 / NCIMB 8711 / NCTC 7292 / S-41).